A 195-amino-acid chain; its full sequence is Probable nicotinate-nucleotide adenylyltransferase (195 aa).

The protein belongs to the NadD family.

The enzyme catalyses nicotinate beta-D-ribonucleotide + ATP + H(+) = deamido-NAD(+) + diphosphate. It functions in the pathway cofactor biosynthesis; NAD(+) biosynthesis; deamido-NAD(+) from nicotinate D-ribonucleotide: step 1/1. Functionally, catalyzes the reversible adenylation of nicotinate mononucleotide (NaMN) to nicotinic acid adenine dinucleotide (NaAD). The protein is Probable nicotinate-nucleotide adenylyltransferase of Salinibacter ruber (strain DSM 13855 / M31).